Consider the following 389-residue polypeptide: MSEQFKDNFWGPNGFETIEKRMNQGTESTRLFLLFLKERAAIEENYSKSLQKLLKSTSQLIEYGTLRDAWYGVRGEAESLVRVHHELGQKIEKDIVAPFSKFKSEQKKVKKNFLYDAYKLNKERKDMESSITKTRAKYDDYSKQAETIAITMETAKNTKTAAEVGKIQSKLQKIQRDASSAEQDYRDSVNKLSMYQPTWEDKVSSNYHTLQLTEEERIDYIKVQLEKYVGAIKSTVPDTETTNRNLVNVITQIDKLEDIHCFVRESRTGTEKPPPPQFISFGGKSSSDYIQNKASYSAPLTSSVSSNSLTSSYNSATTTPTPAPRSTPINLSKKKQAKALYDYVGSDATELDFFAGDIITILDEDESGWFRGELGDRIGLYPSNYCEPI.

Residues E3 to D258 form the F-BAR domain. Residues K119–L192 are a coiled coil. Over residues L300–P328 the composition is skewed to low complexity. The disordered stretch occupies residues L300–I329. The SH3 domain maps to S332 to I389.

The protein is SH3 and F-BAR domain-containing protein DDB_G0274695 of Dictyostelium discoideum (Social amoeba).